The primary structure comprises 364 residues: Mannose-1-phosphate guanyltransferase (364 aa).

It belongs to the transferase hexapeptide repeat family.

Its subcellular location is the cytoplasm. It carries out the reaction alpha-D-mannose 1-phosphate + GTP + H(+) = GDP-alpha-D-mannose + diphosphate. It participates in nucleotide-sugar biosynthesis; GDP-alpha-D-mannose biosynthesis; GDP-alpha-D-mannose from alpha-D-mannose 1-phosphate (GTP route): step 1/1. Involved in cell wall synthesis where it is required for glycosylation. Involved in cell cycle progression through cell-size checkpoint. The protein is Mannose-1-phosphate guanyltransferase (mpg1) of Hypocrea jecorina (Trichoderma reesei).